Reading from the N-terminus, the 255-residue chain is 5'-nucleotidase SurE (255 aa).

Positions 7, 8, 38, and 90 each coordinate a divalent metal cation.

The protein belongs to the SurE nucleotidase family. A divalent metal cation is required as a cofactor.

It localises to the cytoplasm. It carries out the reaction a ribonucleoside 5'-phosphate + H2O = a ribonucleoside + phosphate. In terms of biological role, nucleotidase that shows phosphatase activity on nucleoside 5'-monophosphates. In Picrophilus torridus (strain ATCC 700027 / DSM 9790 / JCM 10055 / NBRC 100828 / KAW 2/3), this protein is 5'-nucleotidase SurE.